Consider the following 232-residue polypeptide: Gene 65 protein (232 aa).

This chain is Gene 65 protein (65), found in Mycobacterium phage D29 (Mycobacteriophage D29).